The chain runs to 965 residues: 26S proteasome non-ATPase regulatory subunit 1 (965 aa).

PC repeat units follow at residues 380-413 (NAVASLGLIHHGQESSAMKVLEPYLPKESVEGFG), 418-452 (GAMLAYGLIHAKHGDATAMSTLAQWLKTAENEPVR), 454-488 (GACLGFGVAGLGSSSVSNYEKVREVLQRDEAVSGE), 489-523 (SAGIAMGLIMAGHLNQEVFNELKQYTVDTQHDKTQ), 560-595 (TGICMLSMAYAGTGSPDVVRRLLEKVATDPNLDVKR), 630-664 (GAAMALGIACAGTGNMEAIALIEPMISDKEGFVRK), 665-706 (GALL…SLVK), and 708-738 (GAIIAQGLLDIGGQNAAVTMQNSDKQPDMGS). The span at 836–856 (ASASSAAAAPSSSSTSGTAPA) shows a compositional bias: low complexity. 2 disordered regions span residues 836–889 (ASAS…LQNP) and 943–965 (TPASSGNTENKPHSTFEININDF). Basic and acidic residues predominate over residues 863–882 (EVDQPGKSKKEKAPEKDTKP).

The protein belongs to the proteasome subunit S1 family.

Acts as a regulatory subunit of the 26 proteasome which is involved in the ATP-dependent degradation of ubiquitinated proteins. The chain is 26S proteasome non-ATPase regulatory subunit 1 (rpn-2) from Caenorhabditis elegans.